We begin with the raw amino-acid sequence, 1393 residues long: DNA-directed RNA polymerase subunit beta' (1393 aa).

Residues C72, C74, C87, and C90 each contribute to the Zn(2+) site. Residues D463, D465, and D467 each coordinate Mg(2+). Zn(2+) is bound by residues C812, C887, C894, and C897.

This sequence belongs to the RNA polymerase beta' chain family. In terms of assembly, the RNAP catalytic core consists of 2 alpha, 1 beta, 1 beta' and 1 omega subunit. When a sigma factor is associated with the core the holoenzyme is formed, which can initiate transcription. Requires Mg(2+) as cofactor. The cofactor is Zn(2+).

The enzyme catalyses RNA(n) + a ribonucleoside 5'-triphosphate = RNA(n+1) + diphosphate. Its function is as follows. DNA-dependent RNA polymerase catalyzes the transcription of DNA into RNA using the four ribonucleoside triphosphates as substrates. This is DNA-directed RNA polymerase subunit beta' from Chlamydia felis (strain Fe/C-56) (Chlamydophila felis).